Reading from the N-terminus, the 1992-residue chain is Fer-1-like protein 4 (1992 aa).

3 C2 domains span residues 1-97 (MALT…VLRE), 214-330 (PRGD…QKWA), and 369-502 (TSSD…AGFN). Over 1-1952 (MALTVCVRHL…PLKTFIFFIW (1952 aa)) the chain is Extracellular. Disordered stretches follow at residues 554 to 606 (RVEP…APEI), 661 to 686 (AGRQ…LEVQ), and 691 to 710 (SEDR…PAQW). Residues 559-569 (PSQTTQRSGLS) show a composition bias toward polar residues. Positions 572-581 (TGKKKKKKEK) are enriched in basic residues. C2 domains lie at 951 to 1078 (PSSG…ELQF) and 1126 to 1250 (ISGH…PQEE). 2 disordered regions span residues 1245–1276 (EDPQ…EAGT) and 1322–1361 (FQGQ…SKVS). Composition is skewed to acidic residues over residues 1247-1257 (PQEEEETEEET) and 1328-1337 (SDDEMDEAGD). 2 C2 domains span residues 1430-1549 (SFSE…ANCG) and 1675-1824 (VPAP…EHCS). 8 residues coordinate Ca(2+): aspartate 1464, aspartate 1470, aspartate 1519, aspartate 1521, aspartate 1527, aspartate 1795, serine 1798, and aspartate 1801. Residues 1862 to 1885 (EAREAQAGKKRKRKRRAGRPEDLE) are disordered. Over residues 1869-1878 (GKKRKRKRRA) the composition is skewed to basic residues. Residues 1953-1973 (RRYWRILVLLLLALITIFLLL) form a helical membrane-spanning segment. Residues 1974–1992 (VFYTIPGQISEVIFSPVHK) are Cytoplasmic-facing.

Requires Ca(2+) as cofactor.

It is found in the membrane. The polypeptide is Fer-1-like protein 4 (Fer1l4) (Mus musculus (Mouse)).